The sequence spans 238 residues: Acyl-protein thioesterase 1 (238 aa).

Active-site charge relay system residues include S120, D174, and H219.

It belongs to the AB hydrolase superfamily. AB hydrolase 2 family.

The protein resides in the cytoplasm. It localises to the nucleus. It carries out the reaction S-hexadecanoyl-L-cysteinyl-[protein] + H2O = L-cysteinyl-[protein] + hexadecanoate + H(+). Its function is as follows. Hydrolyzes fatty acids from S-acylated cysteine residues in proteins with a strong preference for palmitoylated G-alpha proteins over other acyl substrates. Mediates the deacylation of G-alpha proteins such as GPA1 in vivo, but has weak or no activity toward palmitoylated Ras proteins. Has weak lysophospholipase activity in vitro; however such activity may not exist in vivo. This chain is Acyl-protein thioesterase 1, found in Cryptococcus neoformans var. neoformans serotype D (strain B-3501A) (Filobasidiella neoformans).